A 244-amino-acid polypeptide reads, in one-letter code: MKFLVILVLLGAAVAFEDDDKIVGGFTCAKNAVPYQVSLNAGYHFCGGSLINSQWVVSAAHCYKSRIQVRLGEHNIALNEGTEQFIDSQKVIKHPNYNSRNLDNDIMLIKLSTTARLSANIQSVPLPSACASAGTNCLISGWGNTLSSGTNYPDLLQCLNAPILTDSQCSNSYPGEITKNMFCAGFLAGGKDSCQGDSGGPVVCNGQLQGVVSWGYGCAQRNYPGVYTKVCNFVTWIQSTISSN.

The N-terminal stretch at 1 to 15 (MKFLVILVLLGAAVA) is a signal peptide. Positions 16–21 (FEDDDK) are cleaved as a propeptide — activation peptide. In terms of domain architecture, Peptidase S1 spans 22–242 (IVGGFTCAKN…FVTWIQSTIS (221 aa)). 6 disulfides stabilise this stretch: cysteine 28-cysteine 158, cysteine 46-cysteine 62, cysteine 130-cysteine 231, cysteine 137-cysteine 204, cysteine 169-cysteine 183, and cysteine 194-cysteine 218. The active-site Charge relay system is histidine 61. Residues glutamate 73, asparagine 75, and glutamate 83 each contribute to the Ca(2+) site. The active-site Charge relay system is aspartate 105. The Charge relay system role is filled by serine 198.

This sequence belongs to the peptidase S1 family. Ca(2+) is required as a cofactor.

Its subcellular location is the secreted. It localises to the extracellular space. It carries out the reaction Preferential cleavage: Arg-|-Xaa, Lys-|-Xaa.. In Xenopus laevis (African clawed frog), this protein is Trypsin.